The primary structure comprises 315 residues: Indoleacetate decarboxylase activating enzyme (315 aa).

The 291-residue stretch at 21–311 (HDGPGIRTNV…ADIIEAHGVK (291 aa)) folds into the Radical SAM core domain. [4Fe-4S] cluster is bound by residues Cys35, Cys39, Cys42, Cys61, Cys64, Cys67, Cys71, Cys98, Cys101, Cys106, and Cys110. 4Fe-4S ferredoxin-type domains are found at residues 52-81 (PQLLYTKMKCIGCMCCARACPYGAVSAITD) and 89-120 (GYVHHDRSKCDKCTTHECLSACFQEALSIAGE). S-adenosyl-L-methionine-binding positions include Gly149, 198–200 (DCK), and His271.

It belongs to the organic radical-activating enzymes family. [4Fe-4S] cluster serves as cofactor.

It carries out the reaction glycyl-[protein] + reduced [flavodoxin] + S-adenosyl-L-methionine = glycin-2-yl radical-[protein] + semiquinone [flavodoxin] + 5'-deoxyadenosine + L-methionine + H(+). Functionally, catalyzes activation of the indoleacetate decarboxylase OsIAD under anaerobic conditions by generation of an organic free radical on a glycine residue, via a homolytic cleavage of S-adenosyl-L-methionine (SAM). This chain is Indoleacetate decarboxylase activating enzyme, found in Tractidigestivibacter scatoligenes (Olsenella scatoligenes).